Consider the following 349-residue polypeptide: Anthranilate phosphoribosyltransferase (349 aa).

5-phospho-alpha-D-ribose 1-diphosphate contacts are provided by residues Gly82, 85–86 (GD), 92–95 (NVST), 110–118 (KHGNRAVSG), and Ser122. Gly82 is a binding site for anthranilate. Ser94 is a binding site for Mg(2+). Asn113 lines the anthranilate pocket. Anthranilate is bound at residue Arg168. Positions 227 and 228 each coordinate Mg(2+).

The protein belongs to the anthranilate phosphoribosyltransferase family. In terms of assembly, homodimer. Mg(2+) is required as a cofactor.

The enzyme catalyses N-(5-phospho-beta-D-ribosyl)anthranilate + diphosphate = 5-phospho-alpha-D-ribose 1-diphosphate + anthranilate. It functions in the pathway amino-acid biosynthesis; L-tryptophan biosynthesis; L-tryptophan from chorismate: step 2/5. Functionally, catalyzes the transfer of the phosphoribosyl group of 5-phosphorylribose-1-pyrophosphate (PRPP) to anthranilate to yield N-(5'-phosphoribosyl)-anthranilate (PRA). The protein is Anthranilate phosphoribosyltransferase of Pseudomonas putida (strain ATCC 47054 / DSM 6125 / CFBP 8728 / NCIMB 11950 / KT2440).